Here is a 692-residue protein sequence, read N- to C-terminus: Proprotein convertase subtilisin/kexin type 9 (692 aa).

The first 30 residues, 1–30 (MGTVSSRRSWWPLPLPLLLLLLLGPAGARA), serve as a signal peptide directing secretion. Residues 31–152 (QEDEDGDYEE…IEEDSSVFAQ (122 aa)) constitute a propeptide that is removed on maturation. The residue at position 38 (Tyr38) is a Sulfotyrosine. Position 47 is a phosphoserine (Ser47). An Inhibitor I9 domain is found at 77–149 (TYVVVLKEET…VDYIEEDSSV (73 aa)). The 290-residue stretch at 155-444 (PWNLERITPA…VLTPNLVAAL (290 aa)) folds into the Peptidase S8 domain. Active-site charge relay system residues include Asp186 and His226. 2 cysteine pairs are disulfide-bonded: Cys223–Cys255 and Cys323–Cys358. The active-site Charge relay system is the Ser386. Residues 450 to 692 (RAGWQLFCRT…HLVQASQELQ (243 aa)) form a C-terminal domain region. 3 disulfide bridges follow: Cys457–Cys527, Cys477–Cys526, and Cys486–Cys509. N-linked (GlcNAc...) asparagine glycosylation is present at Asn533. Disulfide bonds link Cys534/Cys601, Cys552/Cys600, Cys562/Cys588, Cys608/Cys679, Cys626/Cys678, and Cys635/Cys654. Ser688 carries the phosphoserine modification.

Belongs to the peptidase S8 family. Monomer. Can self-associate to form dimers and higher multimers which may have increased LDLR degrading activity. The precursor protein but not the mature protein may form multimers. Interacts with APOB, VLDLR, LRP8/APOER2 and BACE1. The full-length immature form (pro-PCSK9) interacts with SCNN1A, SCNN1B and SCNN1G. The pro-PCSK9 form (via C-terminal domain) interacts with LDLR. Interacts (via the C-terminal domain) with ANXA2 (via repeat Annexin 1); the interaction inhibits the degradation of LDLR. Ca(2+) serves as cofactor. In terms of processing, cleavage by furin and PCSK5 generates a truncated inactive protein that is unable to induce LDLR degradation. Undergoes autocatalytic cleavage in the endoplasmic reticulum to release the propeptide from the N-terminus and the cleavage of the propeptide is strictly required for its maturation and activation. The cleaved propeptide however remains associated with the catalytic domain through non-covalent interactions, preventing potential substrates from accessing its active site. As a result, it is secreted from cells as a propeptide-containing, enzymatically inactive protein. Post-translationally, phosphorylation protects the propeptide against proteolysis.

Its subcellular location is the cytoplasm. It is found in the secreted. It localises to the endosome. The protein localises to the lysosome. The protein resides in the cell surface. Its subcellular location is the endoplasmic reticulum. It is found in the golgi apparatus. Its activity is regulated as follows. Its proteolytic activity is autoinhibited by the non-covalent binding of the propeptide to the catalytic domain. Inhibited by EGTA. Functionally, crucial player in the regulation of plasma cholesterol homeostasis. Binds to low-density lipid receptor family members: low density lipoprotein receptor (LDLR), very low density lipoprotein receptor (VLDLR), apolipoprotein E receptor (LRP1/APOER) and apolipoprotein receptor 2 (LRP8/APOER2), and promotes their degradation in intracellular acidic compartments. Acts via a non-proteolytic mechanism to enhance the degradation of the hepatic LDLR through a clathrin LDLRAP1/ARH-mediated pathway. May prevent the recycling of LDLR from endosomes to the cell surface or direct it to lysosomes for degradation. Can induce ubiquitination of LDLR leading to its subsequent degradation. Inhibits intracellular degradation of APOB via the autophagosome/lysosome pathway in a LDLR-independent manner. Involved in the disposal of non-acetylated intermediates of BACE1 in the early secretory pathway. Inhibits epithelial Na(+) channel (ENaC)-mediated Na(+) absorption by reducing ENaC surface expression primarily by increasing its proteasomal degradation. Regulates neuronal apoptosis via modulation of LRP8/APOER2 levels and related anti-apoptotic signaling pathways. This chain is Proprotein convertase subtilisin/kexin type 9 (PCSK9), found in Macaca nemestrina (Pig-tailed macaque).